Consider the following 256-residue polypeptide: Thioredoxin-dependent peroxide reductase, mitochondrial (256 aa).

The N-terminal 61 residues, 1–61, are a transit peptide targeting the mitochondrion; that stretch reads MAAAVGRLLR…KLFSTSSSCH (61 aa). Residues 63–221 form the Thioredoxin domain; it reads PAVTQHAPYF…TLRLVKAFQY (159 aa). The residue at position 83 (Lys83) is an N6-succinyllysine. Lys91 carries the post-translational modification N6-acetyllysine; alternate. Lys91 carries the post-translational modification N6-succinyllysine; alternate. The active-site Cysteine sulfenic acid (-SOH) intermediate is the Cys108. Position 146 is a phosphothreonine (Thr146).

The protein belongs to the peroxiredoxin family. AhpC/Prx1 subfamily. In terms of assembly, homodimer; disulfide-linked, upon oxidation. 6 homodimers assemble to form a ring-like dodecamer. Interacts with NEK6. Interacts with LRRK2. Interacts with MAP3K13. Interacts with RPS6KC1 (via PX domain). Post-translationally, phosphorylated by LRRK2; phosphorylation reduces perodixase activity. The enzyme can be inactivated by further oxidation of the cysteine sulfenic acid (C(P)-SOH) to sulphinic acid (C(P)-SO2H) and sulphonic acid (C(P)-SO3H) instead of its condensation to a disulfide bond. In terms of processing, S-palmitoylated.

The protein resides in the mitochondrion. It is found in the cytoplasm. It localises to the early endosome. It catalyses the reaction a hydroperoxide + [thioredoxin]-dithiol = an alcohol + [thioredoxin]-disulfide + H2O. In terms of biological role, thiol-specific peroxidase that catalyzes the reduction of hydrogen peroxide and organic hydroperoxides to water and alcohols, respectively. Plays a role in cell protection against oxidative stress by detoxifying peroxides. Acts synergistically with MAP3K13 to regulate the activation of NF-kappa-B in the cytosol. Required for the maintenance of physical strength. This chain is Thioredoxin-dependent peroxide reductase, mitochondrial (PRDX3), found in Homo sapiens (Human).